We begin with the raw amino-acid sequence, 956 residues long: uncharacterized protein (956 aa).

Residues 40–141 (PATKVSIDKI…IYCMTKAREA (102 aa)) form the Fibronectin type-III domain. Disordered stretches follow at residues 152 to 173 (RNTITSSTAMQPRNSKSEPAPL) and 488 to 600 (NNGD…SYSH). 2 stretches are compositionally biased toward polar residues: residues 153-165 (NTITSSTAMQPRN) and 488-523 (NNGDSLAATNSNNSAEKNRSSGSIQLPLSNNMSRTG). Residue Thr154 is modified to Phosphothreonine. Phosphoserine occurs at positions 501 and 520. The span at 524 to 543 (SIDLISNNNKSINNSNADSA) shows a compositional bias: low complexity. A compositionally biased stretch (polar residues) spans 552–563 (VSYSPSNEPIQP). Over residues 564–574 (SSSLLSQLTQD) the composition is skewed to low complexity. A compositionally biased stretch (polar residues) spans 578–599 (RSMLSNHISSNNENKQQPSSYS). Residues Ser802, Ser842, and Ser895 each carry the phosphoserine modification. The segment at 875–956 (VGPKVPAKEP…NLFNPHSHDS (82 aa)) is disordered. Over residues 895 to 904 (SNSSISSAWS) the composition is skewed to low complexity.

This is an uncharacterized protein from Saccharomyces cerevisiae (strain ATCC 204508 / S288c) (Baker's yeast).